Here is a 393-residue protein sequence, read N- to C-terminus: Acetylornithine aminotransferase (393 aa).

Residues 102-103 (GA) and phenylalanine 136 each bind pyridoxal 5'-phosphate. Residue arginine 139 coordinates N(2)-acetyl-L-ornithine. Residue 219–222 (DEVQ) coordinates pyridoxal 5'-phosphate. The residue at position 248 (lysine 248) is an N6-(pyridoxal phosphate)lysine. A N(2)-acetyl-L-ornithine-binding site is contributed by serine 274. Residue threonine 275 participates in pyridoxal 5'-phosphate binding.

This sequence belongs to the class-III pyridoxal-phosphate-dependent aminotransferase family. ArgD subfamily. As to quaternary structure, homodimer. Requires pyridoxal 5'-phosphate as cofactor.

The protein resides in the cytoplasm. The enzyme catalyses N(2)-acetyl-L-ornithine + 2-oxoglutarate = N-acetyl-L-glutamate 5-semialdehyde + L-glutamate. It functions in the pathway amino-acid biosynthesis; L-arginine biosynthesis; N(2)-acetyl-L-ornithine from L-glutamate: step 4/4. The sequence is that of Acetylornithine aminotransferase from Wolinella succinogenes (strain ATCC 29543 / DSM 1740 / CCUG 13145 / JCM 31913 / LMG 7466 / NCTC 11488 / FDC 602W) (Vibrio succinogenes).